We begin with the raw amino-acid sequence, 115 residues long: MLDKIKNLSELLSNMGALREKMEDVKKRIASIRVVGDAGAGMVTVTATGEGQIINVFINKQLFDSDDNKMLEDLVMAATNDALKKAKEATAYEFQAASGGLDFSEISKMFGGNFG.

This sequence belongs to the YbaB/EbfC family. Homodimer.

The protein localises to the cytoplasm. It is found in the nucleoid. In terms of biological role, binds to DNA and alters its conformation. May be involved in regulation of gene expression, nucleoid organization and DNA protection. The protein is Nucleoid-associated protein LBL_0065 of Leptospira borgpetersenii serovar Hardjo-bovis (strain L550).